The sequence spans 256 residues: Biosynthetic peptidoglycan transglycosylase (256 aa).

The helical transmembrane segment at 26 to 48 (VARWLAYVGGVFAGAWLATQLYY) threads the bilayer.

The protein belongs to the glycosyltransferase 51 family.

The protein resides in the cell inner membrane. The enzyme catalyses [GlcNAc-(1-&gt;4)-Mur2Ac(oyl-L-Ala-gamma-D-Glu-L-Lys-D-Ala-D-Ala)](n)-di-trans,octa-cis-undecaprenyl diphosphate + beta-D-GlcNAc-(1-&gt;4)-Mur2Ac(oyl-L-Ala-gamma-D-Glu-L-Lys-D-Ala-D-Ala)-di-trans,octa-cis-undecaprenyl diphosphate = [GlcNAc-(1-&gt;4)-Mur2Ac(oyl-L-Ala-gamma-D-Glu-L-Lys-D-Ala-D-Ala)](n+1)-di-trans,octa-cis-undecaprenyl diphosphate + di-trans,octa-cis-undecaprenyl diphosphate + H(+). The protein operates within cell wall biogenesis; peptidoglycan biosynthesis. Peptidoglycan polymerase that catalyzes glycan chain elongation from lipid-linked precursors. The polypeptide is Biosynthetic peptidoglycan transglycosylase (Burkholderia pseudomallei (strain K96243)).